The sequence spans 310 residues: Spermatid maturation protein 1 (310 aa).

The chain crosses the membrane as a helical span at residues 29–49; the sequence is ILLLLGLIVCINIGINLVTLL. Positions 215–238 are disordered; that stretch reads ALSHKNNAAGSGGCVEGEQAQGQP. Residues 262–286 are a coiled coil; it reads VYDARDVRRRLRELTQEVEALSHCY.

Testis-specific. Exclusively present in cytoplasm of steps 14-16 elongated spermatids (at protein level).

Its subcellular location is the membrane. The protein resides in the cytoplasm. Required for proper cytoplasm removal during spermatogenesis. This chain is Spermatid maturation protein 1 (Spem1), found in Mus musculus (Mouse).